We begin with the raw amino-acid sequence, 395 residues long: Tyrosine--tRNA ligase 2 (395 aa).

The 'HIGH' region signature appears at 42 to 51 (PTAPDIHLGH). Residues 226-230 (KMSKS) carry the 'KMSKS' region motif. Residue Lys-229 participates in ATP binding. In terms of domain architecture, S4 RNA-binding spans 334 to 394 (TPVANLLKDA…GKRKFARITI (61 aa)).

Belongs to the class-I aminoacyl-tRNA synthetase family. TyrS type 2 subfamily. In terms of assembly, homodimer.

It is found in the cytoplasm. It catalyses the reaction tRNA(Tyr) + L-tyrosine + ATP = L-tyrosyl-tRNA(Tyr) + AMP + diphosphate + H(+). Functionally, catalyzes the attachment of tyrosine to tRNA(Tyr) in a two-step reaction: tyrosine is first activated by ATP to form Tyr-AMP and then transferred to the acceptor end of tRNA(Tyr). This Vibrio parahaemolyticus serotype O3:K6 (strain RIMD 2210633) protein is Tyrosine--tRNA ligase 2.